Consider the following 406-residue polypeptide: Pygopus homolog 2 (406 aa).

2 disordered regions span residues 1-73 (MAAS…DHLV) and 106-323 (VQGG…PQPP). Ala2 carries the post-translational modification N-acetylalanine. Position 40 is a phosphoserine (Ser40). The Nuclear localization signal motif lies at 41–47 (PEKKRRK). 2 stretches are compositionally biased toward pro residues: residues 131-141 (RQPPPFPPNPM) and 149-158 (PQGPGYPPPG). A compositionally biased stretch (polar residues) spans 164–179 (SQPFNQPLGQNFSPPS). Residues 236 to 252 (SLPPNTSPFPGPDPGFP) show a composition bias toward pro residues. Positions 285-296 (NGNQPSFPPNSS) are enriched in polar residues. The residue at position 302 (Thr302) is a Phosphothreonine. The PHD-type zinc finger occupies 327-385 (VYPCGACRSEVNDDQDAILCEASCQKWFHRECTGMTESAYGLLTTEASAVWACDLCLKT).

In terms of assembly, binds to BCL9 via the PHD-type zinc finger motif, and thereby becomes part of the nuclear beta-catenin/TCF complex.

It localises to the nucleus. Functionally, involved in signal transduction through the Wnt pathway. This chain is Pygopus homolog 2 (PYGO2), found in Homo sapiens (Human).